Reading from the N-terminus, the 336-residue chain is MIEADRLISADAIPEEEFLDRAMRPKLLNEYVGQPQVREQMEIFIQAARKRGDALDHLLIFGPPGLGKTTLANIVANEMGVNMRTTSGPVLEKAGDLAALLTNLEPHDVLFIDEIHRLSPVVEEVLYPAMEDYQLDIMIGEGPAARSIKLDLPPFTLIGATTRAGSLTSPLRDRFGIVQRLEFYNVADLQYIVGRSAQCLGLDLTPEGSLEVARRARGTPRIANRLLRRVRDFSEVKSEGAITGVVATQALDMLAVDTEGFDYMDRKLLLAIIDKFMGGPVGLDNLAAAIGEERETIEDVLEPFLIQQGFIQRTPRGRMATQHAYRHFGLTREDLG.

Residues alanine 4–tyrosine 184 form a large ATPase domain (RuvB-L) region. Residues arginine 24, glycine 65, lysine 68, threonine 69, threonine 70, glutamate 131–tyrosine 133, arginine 174, tyrosine 184, and arginine 221 each bind ATP. Threonine 69 lines the Mg(2+) pocket. A small ATPAse domain (RuvB-S) region spans residues asparagine 185–alanine 255. Positions threonine 258 to glycine 336 are head domain (RuvB-H). 3 residues coordinate DNA: arginine 294, arginine 313, and arginine 318.

It belongs to the RuvB family. Homohexamer. Forms an RuvA(8)-RuvB(12)-Holliday junction (HJ) complex. HJ DNA is sandwiched between 2 RuvA tetramers; dsDNA enters through RuvA and exits via RuvB. An RuvB hexamer assembles on each DNA strand where it exits the tetramer. Each RuvB hexamer is contacted by two RuvA subunits (via domain III) on 2 adjacent RuvB subunits; this complex drives branch migration. In the full resolvosome a probable DNA-RuvA(4)-RuvB(12)-RuvC(2) complex forms which resolves the HJ.

Its subcellular location is the cytoplasm. It carries out the reaction ATP + H2O = ADP + phosphate + H(+). In terms of biological role, the RuvA-RuvB-RuvC complex processes Holliday junction (HJ) DNA during genetic recombination and DNA repair, while the RuvA-RuvB complex plays an important role in the rescue of blocked DNA replication forks via replication fork reversal (RFR). RuvA specifically binds to HJ cruciform DNA, conferring on it an open structure. The RuvB hexamer acts as an ATP-dependent pump, pulling dsDNA into and through the RuvAB complex. RuvB forms 2 homohexamers on either side of HJ DNA bound by 1 or 2 RuvA tetramers; 4 subunits per hexamer contact DNA at a time. Coordinated motions by a converter formed by DNA-disengaged RuvB subunits stimulates ATP hydrolysis and nucleotide exchange. Immobilization of the converter enables RuvB to convert the ATP-contained energy into a lever motion, pulling 2 nucleotides of DNA out of the RuvA tetramer per ATP hydrolyzed, thus driving DNA branch migration. The RuvB motors rotate together with the DNA substrate, which together with the progressing nucleotide cycle form the mechanistic basis for DNA recombination by continuous HJ branch migration. Branch migration allows RuvC to scan DNA until it finds its consensus sequence, where it cleaves and resolves cruciform DNA. This Pectobacterium carotovorum subsp. carotovorum (strain PC1) protein is Holliday junction branch migration complex subunit RuvB.